The sequence spans 379 residues: Pectin lyase A (379 aa).

Positions 1-20 (MKYSTIFSAAAAVFAGSAAA) are cleaved as a signal peptide. 2 cysteine pairs are disulfide-bonded: Cys-83–Cys-102 and Cys-92–Cys-226. Residue Thr-88 is glycosylated (O-linked (Man) threonine). A glycan (N-linked (GlcNAc...) asparagine) is linked at Asn-129. Arg-256 is a catalytic residue. Cys-322 and Cys-330 are disulfide-bonded. The O-linked (Man) serine; in strain 4M-147 glycan is linked to Ser-368.

The protein belongs to the polysaccharide lyase 1 family. N-glycosylated at Asn-129 and O-glycosylated at Thr-88 when expressed in Aspergillus nidulans. The protein from strain 4M-147 is O-glycosylated at Thr-88 and Ser-368. PubMed:9195887 modeled GalNAc at the O-glycosylation site, a glycosylation not observed in fungi. The O-linked saccharide is probably mannose.

Its subcellular location is the secreted. The catalysed reaction is Eliminative cleavage of (1-&gt;4)-alpha-D-galacturonan methyl ester to give oligosaccharides with 4-deoxy-6-O-methyl-alpha-D-galact-4-enuronosyl groups at their non-reducing ends.. Its function is as follows. Pectinolytic enzymes consist of four classes of enzymes: pectin lyase, polygalacturonase, pectin methylesterase and rhamnogalacturonase. Among pectinolytic enzymes, pectin lyase is the most important in depolymerization of pectin, since it cleaves internal glycosidic bonds of highly methylated pectins. This chain is Pectin lyase A (pelA), found in Aspergillus niger.